The primary structure comprises 426 residues: Flotillin-1 (426 aa).

Belongs to the band 7/mec-2 family. Flotillin subfamily. As to quaternary structure, heterooligomeric complex of flotillins 1 and 2 and caveolins 1 and 2. Expressed in brain and ventral nerve cord from stage 12-16 of embryogenesis.

The protein localises to the cell membrane. It localises to the membrane. The protein resides in the caveola. Its function is as follows. May act as a scaffolding protein within caveolar membranes, functionally participating in formation of caveolae or caveolae-like vesicles. In Drosophila melanogaster (Fruit fly), this protein is Flotillin-1.